Reading from the N-terminus, the 241-residue chain is Ribosomal RNA small subunit methyltransferase J (241 aa).

S-adenosyl-L-methionine-binding positions include 94 to 95 (RD) and Asp163.

It belongs to the methyltransferase superfamily. RsmJ family.

It localises to the cytoplasm. It carries out the reaction guanosine(1516) in 16S rRNA + S-adenosyl-L-methionine = N(2)-methylguanosine(1516) in 16S rRNA + S-adenosyl-L-homocysteine + H(+). Specifically methylates the guanosine in position 1516 of 16S rRNA. The sequence is that of Ribosomal RNA small subunit methyltransferase J from Francisella tularensis subsp. tularensis (strain FSC 198).